Here is a 413-residue protein sequence, read N- to C-terminus: Arginine biosynthesis bifunctional protein ArgJ, mitochondrial (413 aa).

Threonine 168, lysine 194, threonine 205, and glutamate 292 together coordinate substrate. The active-site Nucleophile is threonine 205.

This sequence belongs to the ArgJ family. In terms of assembly, heterodimer of an alpha and a beta chain. In terms of processing, the alpha and beta chains are autoproteolytically processed from a single precursor protein within the mitochondrion.

It is found in the mitochondrion matrix. The catalysed reaction is N(2)-acetyl-L-ornithine + L-glutamate = N-acetyl-L-glutamate + L-ornithine. It carries out the reaction L-glutamate + acetyl-CoA = N-acetyl-L-glutamate + CoA + H(+). It functions in the pathway amino-acid biosynthesis; L-arginine biosynthesis; L-ornithine and N-acetyl-L-glutamate from L-glutamate and N(2)-acetyl-L-ornithine (cyclic): step 1/1. The protein operates within amino-acid biosynthesis; L-arginine biosynthesis; N(2)-acetyl-L-ornithine from L-glutamate: step 1/4. Catalyzes two activities which are involved in the cyclic version of arginine biosynthesis: the synthesis of acetylglutamate from glutamate and acetyl-CoA, and of ornithine by transacetylation between acetylornithine and glutamate. The polypeptide is Arginine biosynthesis bifunctional protein ArgJ, mitochondrial (Clavispora lusitaniae (strain ATCC 42720) (Yeast)).